The following is an 88-amino-acid chain: Small ribosomal subunit protein uS15 (88 aa).

Belongs to the universal ribosomal protein uS15 family. Part of the 30S ribosomal subunit. Forms a bridge to the 50S subunit in the 70S ribosome, contacting the 23S rRNA.

Functionally, one of the primary rRNA binding proteins, it binds directly to 16S rRNA where it helps nucleate assembly of the platform of the 30S subunit by binding and bridging several RNA helices of the 16S rRNA. Its function is as follows. Forms an intersubunit bridge (bridge B4) with the 23S rRNA of the 50S subunit in the ribosome. The sequence is that of Small ribosomal subunit protein uS15 from Caldicellulosiruptor saccharolyticus (strain ATCC 43494 / DSM 8903 / Tp8T 6331).